The sequence spans 115 residues: Large ribosomal subunit protein bL19 (115 aa).

This sequence belongs to the bacterial ribosomal protein bL19 family.

Functionally, this protein is located at the 30S-50S ribosomal subunit interface and may play a role in the structure and function of the aminoacyl-tRNA binding site. The sequence is that of Large ribosomal subunit protein bL19 from Yersinia pseudotuberculosis serotype O:1b (strain IP 31758).